The following is a 422-amino-acid chain: Solute carrier family 35 member D3 (422 aa).

Helical transmembrane passes span 9–29 (VLGI…NILL), 38–58 (FSFL…SLEL), 64–84 (LIAV…VAVL), 103–123 (MYVV…VLVL), 131–151 (GVLA…AGDL), 155–175 (PIGY…LVLI), 187–207 (LTAQ…CSFA), 224–244 (AMVS…FTTL), 257–277 (FVGV…FSDV), and 280–300 (TSLF…YCVA). Residues 339-365 (AKSGNSEPESAEGAGDSVQQGGQESRG) form a disordered region. Polar residues predominate over residues 355–364 (SVQQGGQESR).

This sequence belongs to the TPT transporter family. SLC35D subfamily. As to quaternary structure, could interact with ATG14, BECN1 and PIK3C3 that form the PI3KC3-C1/AIC/autophagy initiation complex; enhancing the formation of the AIC and promoting autophagy. As to expression, expressed in brain. Expressed in subsets of dopaminergic neurons. Expressed in maturing megakaryocytes.

It is found in the cytoplasmic vesicle. The protein resides in the secretory vesicle. Its subcellular location is the synaptic vesicle membrane. It localises to the early endosome membrane. The protein localises to the endoplasmic reticulum membrane. The enzyme catalyses UDP-alpha-D-glucose(in) = UDP-alpha-D-glucose(out). Its activity is regulated as follows. Inhibited by proton uncouplers that directly abolish the proton electrochemical gradient. In terms of biological role, probable UDP-glucose transmembrane transporter involved in UDP-glucose transport from the cytosol to the lumen of synaptic vesicles. It is involved in platelet dense granules maturation. Alternatively, could function as a molecular adapter enhancing the formation of the PI3KC3-C1/AIC/autophagy initiation complex to promote autophagy in dopaminergic neurons. Could also regulate the plasma membrane localization of the D(1A) dopamine receptor/DRD1 and dopamine signaling. The polypeptide is Solute carrier family 35 member D3 (Mus musculus (Mouse)).